The sequence spans 401 residues: Phosphonopyruvate decarboxylase (401 aa).

The disordered stretch occupies residues 382–401 (WPASAVGSGTRAAAGSAGDR). The span at 384 to 401 (ASAVGSGTRAAAGSAGDR) shows a compositional bias: low complexity.

It belongs to the TPP enzyme family. Thiamine diphosphate is required as a cofactor. It depends on Mg(2+) as a cofactor.

The catalysed reaction is 3-phosphonopyruvate + H(+) = phosphonoacetaldehyde + CO2. The protein operates within secondary metabolite biosynthesis; bialaphos biosynthesis. Involved in the biosynthesis of phosphinothricin tripeptide (PTT), also known as bialaphos (BA), a natural-product antibiotic and potent herbicide. Catalyzes the decarboxylation of phosphonopyruvate (PnPy) to generate phosphonoacetaldehyde (PnAA). The polypeptide is Phosphonopyruvate decarboxylase (Streptomyces hygroscopicus).